The chain runs to 514 residues: Beta-secretase 2 (514 aa).

The signal sequence occupies residues 1 to 20; it reads MGALLRALLLPLLAQWLLRA. Positions 21–62 are excised as a propeptide; it reads VPVLAPAPFTLPLQVAGAANHRASTVPGLGTPELPRADGLAL. The Extracellular segment spans residues 21–469; it reads VPVLAPAPFT…NEPILWIVSY (449 aa). The region spanning 88–425 is the Peptidase A1 domain; it reads YYLEMLIGTP…DRAQRRVGFA (338 aa). Residue Asp-106 is part of the active site. Asn-166 carries an N-linked (GlcNAc...) asparagine glycan. Cystine bridges form between Cys-229-Cys-429, Cys-288-Cys-453, and Cys-340-Cys-389. Asp-299 is an active-site residue. The N-linked (GlcNAc...) asparagine glycan is linked to Asn-362. A helical membrane pass occupies residues 470–490; that stretch reads ALMSVCGAILLVLILLLLFPL. The Cytoplasmic segment spans residues 491 to 514; the sequence is HCRHAPRDPEVVNDESSLVRHRWK.

This sequence belongs to the peptidase A1 family. As to quaternary structure, monomer. Interacts with RTN3 and RTN4. Undergoes autoproteolytic cleavage. Post-translationally, glycosylated.

It is found in the cell membrane. The protein resides in the golgi apparatus. The protein localises to the endoplasmic reticulum. It localises to the endosome. Its subcellular location is the melanosome. The enzyme catalyses Broad endopeptidase specificity. Cleaves Glu-Val-Asn-Leu-|-Asp-Ala-Glu-Phe in the Swedish variant of Alzheimer's amyloid precursor protein.. Its function is as follows. Responsible for the proteolytic processing of the amyloid precursor protein (APP). Cleaves APP, between residues 690 and 691, leading to the generation and extracellular release of beta-cleaved soluble APP, and a corresponding cell-associated C-terminal fragment which is later released by gamma-secretase. It has also been shown that it can cleave APP between residues 671 and 672. Involved in the proteolytic shedding of PMEL at early stages of melanosome biogenesis. Cleaves PMEL within the M-beta fragment to release the amyloidogenic PMEL luminal fragment containing M-alpha and a small portion of M-beta N-terminus. This is a prerequisite step for subsequent processing and assembly of PMEL fibrils into amyloid sheets. Responsible also for the proteolytic processing of CLTRN in pancreatic beta cells. The sequence is that of Beta-secretase 2 (Bace2) from Rattus norvegicus (Rat).